Consider the following 105-residue polypeptide: Thioredoxin (105 aa).

The Thioredoxin domain maps to 1 to 105; it reads MVNNVTDISF…SLLDWINKSI (105 aa). Cysteines 30 and 33 form a disulfide.

This sequence belongs to the thioredoxin family.

Functionally, component of the thioredoxin-thioredoxin reductase system. Participates in various redox reactions through the reversible oxidation of its active center dithiol to a disulfide and catalyzes dithiol-disulfide exchange reactions. This is Thioredoxin (trxA) from Rickettsia typhi (strain ATCC VR-144 / Wilmington).